The following is a 208-amino-acid chain: Segregation and condensation protein B (208 aa).

This sequence belongs to the ScpB family. As to quaternary structure, homodimer. Homodimerization may be required to stabilize the binding of ScpA to the Smc head domains. Component of a cohesin-like complex composed of ScpA, ScpB and the Smc homodimer, in which ScpA and ScpB bind to the head domain of Smc. The presence of the three proteins is required for the association of the complex with DNA.

The protein resides in the cytoplasm. Functionally, participates in chromosomal partition during cell division. May act via the formation of a condensin-like complex containing Smc and ScpA that pull DNA away from mid-cell into both cell halves. This is Segregation and condensation protein B from Mycoplasma pneumoniae (strain ATCC 29342 / M129 / Subtype 1) (Mycoplasmoides pneumoniae).